A 193-amino-acid polypeptide reads, in one-letter code: Potassium-transporting ATPase KdpC subunit (193 aa).

A helical transmembrane segment spans residues 14 to 34 (ITFTFLVLCGLVYPLIVTGIA).

This sequence belongs to the KdpC family. The system is composed of three essential subunits: KdpA, KdpB and KdpC.

The protein resides in the cell membrane. Part of the high-affinity ATP-driven potassium transport (or Kdp) system, which catalyzes the hydrolysis of ATP coupled with the electrogenic transport of potassium into the cytoplasm. This subunit acts as a catalytic chaperone that increases the ATP-binding affinity of the ATP-hydrolyzing subunit KdpB by the formation of a transient KdpB/KdpC/ATP ternary complex. The protein is Potassium-transporting ATPase KdpC subunit of Bacillus cereus (strain G9842).